A 555-amino-acid chain; its full sequence is Inorganic phosphate transporter 1-11 (555 aa).

Over methionine 1–alanine 28 the chain is Cytoplasmic. Residues isoleucine 29–valine 49 traverse the membrane as a helical segment. Residues serine 50–asparagine 77 are Extracellular-facing. Residues methionine 78–glycine 98 form a helical membrane-spanning segment. The Cytoplasmic segment spans residues aspartate 99–arginine 105. Residues valine 106–glycine 126 form a helical membrane-spanning segment. Over serine 127 to lysine 130 the chain is Extracellular. The helical transmembrane segment at alanine 131–tyrosine 151 threads the bilayer. The Cytoplasmic portion of the chain corresponds to proline 152–arginine 167. The helical transmembrane segment at glycine 168–valine 188 threads the bilayer. Residues serine 189–proline 216 lie on the Extracellular side of the membrane. A helical membrane pass occupies residues alanine 217 to phenylalanine 237. At tyrosine 238 to arginine 298 the chain is on the cytoplasmic side. A helical transmembrane segment spans residues histidine 299 to serine 319. At glutamine 320 to lysine 351 the chain is on the extracellular side. A helical transmembrane segment spans residues alanine 352–isoleucine 372. Over aspartate 373 to arginine 377 the chain is Cytoplasmic. A helical transmembrane segment spans residues tyrosine 378 to leucine 398. Residues tyrosine 399–leucine 408 are Extracellular-facing. A helical membrane pass occupies residues phenylalanine 409–phenylalanine 436. Over proline 437 to serine 442 the chain is Cytoplasmic. A helical transmembrane segment spans residues threonine 443–isoleucine 463. Topologically, residues glutamine 464–lysine 477 are extracellular. A helical membrane pass occupies residues alanine 478–glutamate 498. The Cytoplasmic portion of the chain corresponds to threonine 499–alanine 555. Residues glutamate 506–alanine 555 are disordered. Residues glycine 512–alanine 521 show a composition bias toward gly residues. Residues proline 522 to aspartate 535 show a composition bias toward low complexity. The segment covering alanine 544 to alanine 555 has biased composition (polar residues).

This sequence belongs to the major facilitator superfamily. Phosphate:H(+) symporter (TC 2.A.1.9) family.

The protein resides in the membrane. Functionally, symbiosis-specific regulated inorganic phosphate (Pi) transporter. Probably involved in symbiosis-mediated Pi uptake in roots colonized by myccorhizal fungi. This chain is Inorganic phosphate transporter 1-11 (PHT1-11), found in Oryza sativa subsp. japonica (Rice).